Reading from the N-terminus, the 331-residue chain is Fructose-1,6-bisphosphatase class 1 (331 aa).

Mg(2+) contacts are provided by Glu100, Asp120, Leu122, and Asp123. Substrate-binding positions include 123–126, Asn216, Tyr243, 261–263, and Lys273; these read DGSS and YLY. Position 279 (Glu279) interacts with Mg(2+).

It belongs to the FBPase class 1 family. As to quaternary structure, homotetramer. Mg(2+) is required as a cofactor.

The protein localises to the cytoplasm. The catalysed reaction is beta-D-fructose 1,6-bisphosphate + H2O = beta-D-fructose 6-phosphate + phosphate. The protein operates within carbohydrate biosynthesis; gluconeogenesis. This chain is Fructose-1,6-bisphosphatase class 1, found in Amoebophilus asiaticus (strain 5a2).